We begin with the raw amino-acid sequence, 175 residues long: Ribosome maturation factor RimM (175 aa).

The PRC barrel domain maps to 96-175 (EEDYYWHDLI…TITVDWDAGF (80 aa)).

Belongs to the RimM family. As to quaternary structure, binds ribosomal protein uS19.

The protein resides in the cytoplasm. Functionally, an accessory protein needed during the final step in the assembly of 30S ribosomal subunit, possibly for assembly of the head region. Essential for efficient processing of 16S rRNA. May be needed both before and after RbfA during the maturation of 16S rRNA. It has affinity for free ribosomal 30S subunits but not for 70S ribosomes. In Haemophilus ducreyi (strain 35000HP / ATCC 700724), this protein is Ribosome maturation factor RimM.